Reading from the N-terminus, the 206-residue chain is Superoxide dismutase [Mn] (206 aa).

4 residues coordinate Mn(2+): His27, His82, Asp168, and His172.

This sequence belongs to the iron/manganese superoxide dismutase family. Homodimer. Mn(2+) serves as cofactor.

The catalysed reaction is 2 superoxide + 2 H(+) = H2O2 + O2. Its function is as follows. Destroys superoxide anion radicals which are normally produced within the cells and which are toxic to biological systems. This Salmonella typhi protein is Superoxide dismutase [Mn] (sodA).